The chain runs to 292 residues: mRNA export protein 33 (292 aa).

Residues 1 to 76 (MPPKKAAKGK…RKRREEEKRA (76 aa)) are disordered. 2 stretches are compositionally biased toward basic and acidic residues: residues 9-26 (GKGD…KKAA) and 58-76 (KDAK…EKRA). A C3H1-type zinc finger spans residues 134–172 (INTDIVCKFFLEACETGKYGWLWQCPNGNMTCIYKHALP).

Its subcellular location is the cytoplasm. Functionally, functions as a component of the nuclear pore complex (NPC). NPC components, collectively referred to as nucleoporins (NUPs), can play the role of both NPC structural components and of docking or interaction partners for transiently associated nuclear transport factors. Active directional transport is assured by both, a Phe-Gly (FG) repeat affinity gradient for these transport factors across the NPC and a transport cofactor concentration gradient across the nuclear envelope. Involved in the export of mRNA from the nucleus to the cytoplasm. May play a role in mitotic spindle formation and/or function. The sequence is that of mRNA export protein 33 (mep33) from Schizosaccharomyces pombe (strain 972 / ATCC 24843) (Fission yeast).